The sequence spans 379 residues: Dual-specificity RNA methyltransferase RlmN (379 aa).

The Proton acceptor role is filled by Glu-95. The 245-residue stretch at 101–345 (EETRGTLCVS…TTVRKTRGDD (245 aa)) folds into the Radical SAM core domain. The cysteines at positions 108 and 350 are disulfide-linked. Residues Cys-115, Cys-119, and Cys-122 each coordinate [4Fe-4S] cluster. S-adenosyl-L-methionine is bound by residues 176–177 (GE), Ser-208, 230–232 (SLH), and Asn-307. Residue Cys-350 is the S-methylcysteine intermediate of the active site.

It belongs to the radical SAM superfamily. RlmN family. [4Fe-4S] cluster serves as cofactor.

It is found in the cytoplasm. The catalysed reaction is adenosine(2503) in 23S rRNA + 2 reduced [2Fe-2S]-[ferredoxin] + 2 S-adenosyl-L-methionine = 2-methyladenosine(2503) in 23S rRNA + 5'-deoxyadenosine + L-methionine + 2 oxidized [2Fe-2S]-[ferredoxin] + S-adenosyl-L-homocysteine. The enzyme catalyses adenosine(37) in tRNA + 2 reduced [2Fe-2S]-[ferredoxin] + 2 S-adenosyl-L-methionine = 2-methyladenosine(37) in tRNA + 5'-deoxyadenosine + L-methionine + 2 oxidized [2Fe-2S]-[ferredoxin] + S-adenosyl-L-homocysteine. Functionally, specifically methylates position 2 of adenine 2503 in 23S rRNA and position 2 of adenine 37 in tRNAs. m2A2503 modification seems to play a crucial role in the proofreading step occurring at the peptidyl transferase center and thus would serve to optimize ribosomal fidelity. This chain is Dual-specificity RNA methyltransferase RlmN, found in Burkholderia cenocepacia (strain HI2424).